The sequence spans 127 residues: Major sperm protein 38 (127 aa).

Alanine 2 bears the N-acetylalanine mark. In terms of domain architecture, MSP spans 9 to 126; that stretch reads DIQTQPGTKI…RRKNLPIEYN (118 aa).

Sperm.

The protein localises to the cell projection. The protein resides in the pseudopodium. It is found in the cytoplasm. It localises to the cytoskeleton. Central component in molecular interactions underlying sperm crawling. Forms an extensive filament system that extends from sperm villipoda, along the leading edge of the pseudopod. The protein is Major sperm protein 38 (msp-38) of Caenorhabditis elegans.